The sequence spans 257 residues: Outer membrane protein YaiO (257 aa).

Positions 1–19 are cleaved as a signal peptide; the sequence is MIKRTLLAAAIFSALPAYA.

The protein localises to the cell outer membrane. This Escherichia coli (strain K12) protein is Outer membrane protein YaiO (yaiO).